Reading from the N-terminus, the 335-residue chain is Antigen-presenting glycoprotein CD1d (335 aa).

The signal sequence occupies residues methionine 1–alanine 19. Residues glutamate 20 to serine 301 lie on the Extracellular side of the membrane. N-linked (GlcNAc...) asparagine glycans are attached at residues asparagine 38 and asparagine 60. Aspartate 98 is a binding site for a D-galactosylceramide. Disulfide bonds link cysteine 120/cysteine 184 and cysteine 224/cysteine 279. Asparagine 126 carries an N-linked (GlcNAc...) asparagine glycan. Aspartate 169–threonine 172 serves as a coordination point for a D-galactosylceramide. N-linked (GlcNAc...) asparagine glycosylation is present at asparagine 181. Residues proline 185–valine 292 enclose the Ig-like domain. A helical membrane pass occupies residues methionine 302 to threonine 322. Residues serine 323–leucine 335 lie on the Cytoplasmic side of the membrane. An Internalization signal motif is present at residues tyrosine 331 to valine 334.

As to quaternary structure, heterodimer with B2M (beta-2-microglobulin). Interacts with MHC II. As to expression, expressed on cortical thymocytes, on certain T-cell leukemias, and in various other tissues.

Its subcellular location is the cell membrane. It localises to the basolateral cell membrane. The protein resides in the endosome membrane. It is found in the lysosome membrane. The protein localises to the endoplasmic reticulum membrane. Its function is as follows. Antigen-presenting protein that binds self and non-self glycolipids and presents them to T-cell receptors on natural killer T-cells. The chain is Antigen-presenting glycoprotein CD1d (CD1D) from Homo sapiens (Human).